Here is a 107-residue protein sequence, read N- to C-terminus: MPQLLTPPLSPLIIAVLNGNIEYTSELLQNGVDIDVRDKNGNSALHIAASKGYTKIATMLLLYGATIDAPNFELATPLHYAAANNYKDLTQYLLNMNANKSAVNKYN.

3 ANK repeats span residues 7 to 36 (PPLSPLIIAVLNGNIEYTSELLQNGVDIDV), 40 to 69 (NGNSALHIAASKGYTKIATMLLLYGATIDA), and 73 to 102 (ELATPLHYAAANNYKDLTQYLLNMNANKSA).

The protein is Putative ankyrin repeat protein RP714 of Rickettsia prowazekii (strain Madrid E).